Here is a 784-residue protein sequence, read N- to C-terminus: Probable leucine-rich repeat receptor-like protein kinase IMK3 (784 aa).

The first 48 residues, 1–48 (MEFITQNQAITSLSMINTDIDQPKASLRSRFLLHLIICLLFFVPPCSS), serve as a signal peptide directing secretion. At 49 to 409 (QAWDGVVITQ…PSHRNLSTKD (361 aa)) the chain is on the extracellular side. The N-linked (GlcNAc...) asparagine glycan is linked to Asn82. LRR repeat units lie at residues 126-148 (ALRKLSLHDNNLGGSIPMSLGLI), 150-172 (NLRGVQLFNNRLTGSIPASLGVS), 174-197 (FLQTLDLSNNLLSEIIPPNLADSS), 198-220 (KLLRLNLSFNSLSGQIPVSLSRS), 222-242 (SLQFLALDHNNLSGPILDTWG), 247-268 (NLRVLSLDHNSLSGPFPFSLCN), 271-294 (QLQDFSFSHNRIRGTLPSELSKLT), 295-317 (KLRKMDISGNSVSGHIPETLGNI), 319-342 (SLIHLDLSQNKLTGEIPISISDLE), and 343-365 (SLNFFNVSYNNLSGPVPTLLSQK). Asn203, Asn232, and Asn268 each carry an N-linked (GlcNAc...) asparagine glycan. Asn316 carries an N-linked (GlcNAc...) asparagine glycan. 4 N-linked (GlcNAc...) asparagine glycosylation sites follow: Asn348, Asn353, Asn367, and Asn404. The helical transmembrane segment at 410 to 430 (IILIASGALLIVMLILVCVLC) threads the bilayer. Over 431–784 (CLLRKKANET…VPEASASTSQ (354 aa)) the chain is Cytoplasmic. Positions 441–467 (KAKGGEAGPGAVAAKTEKGGEAEAGGE) are disordered. The Protein kinase domain occupies 488–773 (CATAEIMGKS…TTATTSEPLI (286 aa)). ATP is bound by residues 494 to 502 (MGKSTYGTV) and Lys516. The interval 760-784 (RPEETTATTSEPLIDVPEASASTSQ) is disordered.

It belongs to the protein kinase superfamily. Ser/Thr protein kinase family. As to quaternary structure, interacts with AGL24. Post-translationally, autophosphorylated. In terms of tissue distribution, expressed in meristems, including roots, vegetative, inflorescence and floral meristems, and in embryos.

The protein localises to the cell membrane. It catalyses the reaction L-seryl-[protein] + ATP = O-phospho-L-seryl-[protein] + ADP + H(+). The catalysed reaction is L-threonyl-[protein] + ATP = O-phospho-L-threonyl-[protein] + ADP + H(+). Functionally, can phosphorylate AGL24. The chain is Probable leucine-rich repeat receptor-like protein kinase IMK3 (IMK3) from Arabidopsis thaliana (Mouse-ear cress).